The following is a 400-amino-acid chain: Formate-dependent phosphoribosylglycinamide formyltransferase (400 aa).

N(1)-(5-phospho-beta-D-ribosyl)glycinamide is bound by residues 22-23 (EL) and E82. ATP-binding positions include R115, K157, 162–167 (SSGKGQ), 197–200 (EGFI), and E205. Residues 120-315 (RLAAETLGLP…EFELHARAIL (196 aa)) enclose the ATP-grasp domain. E274 and E286 together coordinate Mg(2+). N(1)-(5-phospho-beta-D-ribosyl)glycinamide is bound by residues D293, K362, and 369 to 370 (RR).

Belongs to the PurK/PurT family. Homodimer.

The catalysed reaction is N(1)-(5-phospho-beta-D-ribosyl)glycinamide + formate + ATP = N(2)-formyl-N(1)-(5-phospho-beta-D-ribosyl)glycinamide + ADP + phosphate + H(+). It functions in the pathway purine metabolism; IMP biosynthesis via de novo pathway; N(2)-formyl-N(1)-(5-phospho-D-ribosyl)glycinamide from N(1)-(5-phospho-D-ribosyl)glycinamide (formate route): step 1/1. Involved in the de novo purine biosynthesis. Catalyzes the transfer of formate to 5-phospho-ribosyl-glycinamide (GAR), producing 5-phospho-ribosyl-N-formylglycinamide (FGAR). Formate is provided by PurU via hydrolysis of 10-formyl-tetrahydrofolate. This Cupriavidus metallidurans (strain ATCC 43123 / DSM 2839 / NBRC 102507 / CH34) (Ralstonia metallidurans) protein is Formate-dependent phosphoribosylglycinamide formyltransferase.